The chain runs to 255 residues: tRNA (guanine-N(1)-)-methyltransferase (255 aa).

S-adenosyl-L-methionine contacts are provided by residues G113 and 133–138; that span reads IGDYVL.

Belongs to the RNA methyltransferase TrmD family. In terms of assembly, homodimer.

It is found in the cytoplasm. It carries out the reaction guanosine(37) in tRNA + S-adenosyl-L-methionine = N(1)-methylguanosine(37) in tRNA + S-adenosyl-L-homocysteine + H(+). Specifically methylates guanosine-37 in various tRNAs. In Escherichia fergusonii (strain ATCC 35469 / DSM 13698 / CCUG 18766 / IAM 14443 / JCM 21226 / LMG 7866 / NBRC 102419 / NCTC 12128 / CDC 0568-73), this protein is tRNA (guanine-N(1)-)-methyltransferase.